The sequence spans 91 residues: UPF0147 protein APE_2336a (91 aa).

Belongs to the UPF0147 family.

This Aeropyrum pernix (strain ATCC 700893 / DSM 11879 / JCM 9820 / NBRC 100138 / K1) protein is UPF0147 protein APE_2336a.